The following is a 987-amino-acid chain: MGPLWFCCLPLALLPLLAAVEETLMDSTTATAELGWMVHPPSGWEEVSGYDENMNTIRTYQVCNVFESSQNNWLRTKYIRRRGAHRIHVEMKFSVRDCSSIPNVPGSCKETFNLYYYESDFDSATKTFPNWMENPWMKVDTIAADERFSQVDLGGRVMKINTEVRSFGPVSKNGFYLAFQDYWGCMSLIAVRVFYRKCPRVIQNGADFQETLSGAESTSLVASRGTCINKAEEVDVPIKQHCNGDGEWLVPIGRCMCRPGYESVANGTVCRGCPSGTFKASQGDEGCVHCPINSRTTSEGATNCVCRNGYYRADADPVDMPCTTIPSAPQSVISSVNETSLMLEWTPPRDSGGREDLVYNIICKSCGSGRGACTRCGDNVQFAPRQLGLTEPRIYISDLLAHTQYTFEIQAVNGVTDQSPFSPQFASVNITTNQAAPSAVSIMHQVSRTVDSITLSWSQPDQPNGVILDYELQYYEKNLSELNSTAVKSPTNTVTVQNLKAGTIYVFQVRARTVAGYGRYSGKMYFQTMTEAEYQTSVQEKLPLIIGSSAAGLVFLIAVVVIIIVCNRRGFERADSEYTDKLQHYTSGHMTPGMKIYIDPFTYEDPNEAVREFAKEIDISCVKIEQVIGAGEFGEVCSGHLKLPGKREIFVAIKTLKSGYTEKQRRDFLSEASIMGQFDHPNVIHLEGVVTKSSPVMIITEFMENGSLDSFLRQNDGQFTVIQLVGMLRGIAAGMKYLADMNYVHRDLAARNTLVNSNLVCKVSDFGLSRFLEDDTSDPTYTSALGGKIPIRWTAPEAIQYRKFTSASDVWSYGIVMWEVMSYGERPYWDMTNQDVINAIEQDYRLPPPMDCPNALHQLMLDCWQKDRNHRPKFGQIVNTLDKMIRNPNSLKAMAPLSSGVNLPLLDRTIPDYTSFNTVDEWLDAIKMSQYKESYASAGFTTFDIVSQMTVEDILRVGVTLAGHQKKILNSIQVMRAQMNQIQSVEV.

A signal peptide spans 1–19 (MGPLWFCCLPLALLPLLAA). Residues 20 to 544 (VEETLMDSTT…QTSVQEKLPL (525 aa)) lie on the Extracellular side of the membrane. The Eph LBD domain occupies 21-203 (EETLMDSTTA…FYRKCPRVIQ (183 aa)). Intrachain disulfides connect Cys-63–Cys-185 and Cys-98–Cys-108. N-linked (GlcNAc...) asparagine glycans are attached at residues Asn-266, Asn-337, Asn-429, Asn-478, and Asn-483. Fibronectin type-III domains lie at 325–435 (IPSA…TNQA) and 436–531 (APSA…TMTE). The chain crosses the membrane as a helical span at residues 545–565 (IIGSSAAGLVFLIAVVVIIIV). The Cytoplasmic segment spans residues 566–987 (CNRRGFERAD…QMNQIQSVEV (422 aa)). A Protein kinase domain is found at 622–885 (VKIEQVIGAG…QIVNTLDKMI (264 aa)). ATP is bound by residues 628-636 (IGAGEFGEV) and Lys-654. The active-site Proton acceptor is Asp-747. A Glycyl lysine isopeptide (Lys-Gly) (interchain with G-Cter in ubiquitin) cross-link involves residue Lys-892. The 65-residue stretch at 914–978 (TSFNTVDEWL…LNSIQVMRAQ (65 aa)) folds into the SAM domain. Positions 985 to 987 (VEV) match the PDZ-binding motif.

This sequence belongs to the protein kinase superfamily. Tyr protein kinase family. Ephrin receptor subfamily. Heterotetramer upon binding of the ligand. The heterotetramer is composed of an ephrin dimer and a receptor dimer. Oligomerization is probably required to induce biological responses. Post-translationally, ligand binding induces cleavage by matrix metalloproteinases (MMPs) such as MMP7/MMP9, producing an EphB2/N-terminal fragment (NTF) and a C-terminal long fragment (EphB2-LF). EphB2-LF is further cleaved by MMPs, producing EphB2/CTF1 which is further cleaved by the PS1/gamma-secretase producing EphB2/CTF2. Polyubiquitinated; ligand binding stimulates ubiquitination. Ubiquitinated by RNF186 at Lys-892, mainly through 'Lys-27'-linked polyubiquitin chains.

It is found in the cell membrane. The protein localises to the cell projection. It localises to the axon. Its subcellular location is the dendrite. It catalyses the reaction L-tyrosyl-[protein] + ATP = O-phospho-L-tyrosyl-[protein] + ADP + H(+). In terms of biological role, receptor tyrosine kinase which binds promiscuously transmembrane ephrin-B family ligands residing on adjacent cells, leading to contact-dependent bidirectional signaling into neighboring cells. The signaling pathway downstream of the receptor is referred to as forward signaling while the signaling pathway downstream of the ephrin ligand is referred to as reverse signaling. Functions in axon guidance during development. In addition to axon guidance, also regulates dendritic spines development and maturation and stimulates the formation of excitatory synapses. The polypeptide is Ephrin type-B receptor 2 (EPHB2) (Coturnix japonica (Japanese quail)).